The primary structure comprises 267 residues: Octanoyltransferase (267 aa).

The segment at 1 to 30 (MPTGKLRQKPPYAAIMTNSPVTPSTETQQP) is disordered. Polar residues predominate over residues 16-28 (MTNSPVTPSTETQ). The BPL/LPL catalytic domain maps to 77–265 (GTASELVWLV…AFESVFGPRQ (189 aa)). Substrate contacts are provided by residues 116 to 123 (RGGEYTYH), 196 to 198 (AIG), and 209 to 211 (GIA). The active-site Acyl-thioester intermediate is the Cys-227.

It belongs to the LipB family.

The protein resides in the cytoplasm. It carries out the reaction octanoyl-[ACP] + L-lysyl-[protein] = N(6)-octanoyl-L-lysyl-[protein] + holo-[ACP] + H(+). The protein operates within protein modification; protein lipoylation via endogenous pathway; protein N(6)-(lipoyl)lysine from octanoyl-[acyl-carrier-protein]: step 1/2. Functionally, catalyzes the transfer of endogenously produced octanoic acid from octanoyl-acyl-carrier-protein onto the lipoyl domains of lipoate-dependent enzymes. Lipoyl-ACP can also act as a substrate although octanoyl-ACP is likely to be the physiological substrate. The polypeptide is Octanoyltransferase (Brucella abortus biovar 1 (strain 9-941)).